The primary structure comprises 310 residues: tRNA dimethylallyltransferase (310 aa).

14-21 contributes to the ATP binding site; the sequence is GPTASGKT. Position 16–21 (16–21) interacts with substrate; sequence TASGKT. 3 interaction with substrate tRNA regions span residues 39 to 42, 163 to 167, and 244 to 249; these read DSAL, QRLSR, and RCVGYR.

It belongs to the IPP transferase family. In terms of assembly, monomer. It depends on Mg(2+) as a cofactor.

The enzyme catalyses adenosine(37) in tRNA + dimethylallyl diphosphate = N(6)-dimethylallyladenosine(37) in tRNA + diphosphate. Functionally, catalyzes the transfer of a dimethylallyl group onto the adenine at position 37 in tRNAs that read codons beginning with uridine, leading to the formation of N6-(dimethylallyl)adenosine (i(6)A). This chain is tRNA dimethylallyltransferase, found in Aeromonas salmonicida (strain A449).